Here is a 376-residue protein sequence, read N- to C-terminus: Arabinogalactan endo-beta-1,4-galactanase (376 aa).

Residues 1 to 17 (MKKKILAATAILLAAIA) form the signal peptide. The active-site Proton donor is the E161. The active-site Nucleophile is E270. D281 and N285 together coordinate Ca(2+).

The protein belongs to the glycosyl hydrolase 53 family. The cofactor is Ca(2+).

It catalyses the reaction The enzyme specifically hydrolyzes (1-&gt;4)-beta-D-galactosidic linkages in type I arabinogalactans.. In Cellvibrio japonicus (strain Ueda107) (Pseudomonas fluorescens subsp. cellulosa), this protein is Arabinogalactan endo-beta-1,4-galactanase (ganB).